Here is a 142-residue protein sequence, read N- to C-terminus: Large ribosomal subunit protein uL23 (142 aa).

Belongs to the universal ribosomal protein uL23 family.

Its function is as follows. This protein binds to a specific region on the 26S rRNA. This is Large ribosomal subunit protein uL23 (RPL25) from Cyberlindnera jadinii (Torula yeast).